The chain runs to 419 residues: Phosphatidylinositol 5-phosphate 4-kinase type-2 gamma (419 aa).

The PIPK domain occupies Ala-46 to Phe-418. Residues Gln-299–Thr-310 are compositionally biased toward acidic residues. The segment at Gln-299 to Val-320 is disordered.

Post-translationally, phosphorylated, phosphorylation is induced by EGF.

The protein localises to the endoplasmic reticulum. It is found in the cytoplasm. It carries out the reaction a 1,2-diacyl-sn-glycero-3-phospho-(1D-myo-inositol-5-phosphate) + ATP = a 1,2-diacyl-sn-glycero-3-phospho-(1D-myo-inositol-4,5-bisphosphate) + ADP + H(+). The enzyme catalyses 1,2-dihexadecanoyl-sn-glycero-3-phospho-(1D-myo-inositol-5-phosphate) + ATP = 1,2-dihexadecanoyl-sn-glycero-3-phospho-(1D-myo-inositol-4,5-bisphosphate) + ADP + H(+). The catalysed reaction is 1,2-dihexadecanoyl-sn-glycero-3-phospho-(1D-myo-inositol-5-phosphate) + GTP = 1,2-dihexadecanoyl-sn-glycero-3-phospho-(1D-myo-inositol-4,5-bisphosphate) + GDP + H(+). Phosphatidylinositol 5-phosphate 4-kinase with low enzymatic activity. May be a GTP sensor, has higher GTP-dependent kinase activity than ATP-dependent kinase activity. The chain is Phosphatidylinositol 5-phosphate 4-kinase type-2 gamma (pip4k2c) from Xenopus tropicalis (Western clawed frog).